A 112-amino-acid chain; its full sequence is Chaperone NapD (112 aa).

Belongs to the NapD family. Interacts with the cytoplasmic NapA precursor.

It is found in the cytoplasm. Chaperone for NapA, the catalytic subunit of the periplasmic nitrate reductase. It binds directly and specifically to the twin-arginine signal peptide of NapA, preventing premature interaction with the Tat translocase and premature export. The chain is Chaperone NapD from Paracoccus pantotrophus (Thiosphaera pantotropha).